The primary structure comprises 62 residues: Calmodulin regulator protein PCP4 (62 aa).

Residues 1–39 (MSERQGAGATNGKDKTSGENDGQKKVQEEFDIDMDAPET) are disordered. The span at 12-28 (GKDKTSGENDGQKKVQE) shows a compositional bias: basic and acidic residues. The segment at 28-40 (EEFDIDMDAPETE) is acidic; binds calcium and is required for modulating the calcium-binding kinetics of calmodulin. The region spanning 39–62 (TERAAVAIQSQFRKFQKKKAGSQS) is the IQ domain.

Belongs to the PCP4 family. In terms of assembly, binds to both calcium-free and calcium-bound calmodulin. The affinity for the calcium-bound form is 50-fold greater.

Functions as a modulator of calcium-binding by calmodulin. Thereby, regulates calmodulin activity and the different processes it controls. For instance, may play a role in neuronal differentiation through activation of calmodulin-dependent kinase signaling pathways. The chain is Calmodulin regulator protein PCP4 from Homo sapiens (Human).